A 143-amino-acid chain; its full sequence is 3-hydroxyacyl-[acyl-carrier-protein] dehydratase FabZ (143 aa).

His-49 is a catalytic residue.

It belongs to the thioester dehydratase family. FabZ subfamily.

It is found in the cytoplasm. It catalyses the reaction a (3R)-hydroxyacyl-[ACP] = a (2E)-enoyl-[ACP] + H2O. Functionally, involved in unsaturated fatty acids biosynthesis. Catalyzes the dehydration of short chain beta-hydroxyacyl-ACPs and long chain saturated and unsaturated beta-hydroxyacyl-ACPs. This is 3-hydroxyacyl-[acyl-carrier-protein] dehydratase FabZ from Ehrlichia chaffeensis (strain ATCC CRL-10679 / Arkansas).